The chain runs to 279 residues: MRTTISQLKEMKQNKQKIAILTAYDYPTAQILDKAGIPAILVGDSLGMVVLGYDSTVSVTMEDMLHHLKAVVRGSQKALIIADMPFMTYHLSPEQALLNAGRFIQEGGAQAVKLEGGVNVADKVKRIVDCGIPVMGHIGLTPQSVNQLSGFKVQGKTLATALSLIEDAKALEKAGAFAIVLETMPAELAAIITAGISIPTIGIGAGEECDGQVQVISDMLGMFTDFVPKHTKRYADLNGSITKAVSEYAAEVTKGAFPTLKESFTLDKKVLEELKKCVL.

Mg(2+)-binding residues include Asp-44 and Asp-83. Residues 44–45 (DS), Asp-83, and Lys-113 each bind 3-methyl-2-oxobutanoate. Glu-115 contacts Mg(2+). Residue Glu-182 is the Proton acceptor of the active site.

The protein belongs to the PanB family. Homodecamer; pentamer of dimers. The cofactor is Mg(2+).

It is found in the cytoplasm. It catalyses the reaction 3-methyl-2-oxobutanoate + (6R)-5,10-methylene-5,6,7,8-tetrahydrofolate + H2O = 2-dehydropantoate + (6S)-5,6,7,8-tetrahydrofolate. The protein operates within cofactor biosynthesis; (R)-pantothenate biosynthesis; (R)-pantoate from 3-methyl-2-oxobutanoate: step 1/2. Catalyzes the reversible reaction in which hydroxymethyl group from 5,10-methylenetetrahydrofolate is transferred onto alpha-ketoisovalerate to form ketopantoate. This Dehalococcoides mccartyi (strain CBDB1) protein is 3-methyl-2-oxobutanoate hydroxymethyltransferase.